The primary structure comprises 601 residues: MGSVSSLISGHSLHSKHCRASQYKLRKSSHLKKLNRYSDGLLRFGFSQDSGRGKSSSKMGKSEDFFYIKVSQKARGSHRPDYTALSSGDMGGQTGVDFDPATPPKLMPFSSQLEMSSDKAAVRPTAFKPVLPRSGAILHSSPESTNHQLHPMPPDKPKEQELKPGLCSGALSDSGRNSMSSLPTHSTTSSYQLDPLVTPVGPTSRFGGSAHNITQGIILQDSNMMSLKALSFSDGGSKLAHPGKVEKGSSCVRSPLSTDECTIQELEQKLLQRETALQKLQRSFDEKEFASGQTFEERPRRTRDELECLEPKSKLKPASQKSQRTQQVLQLQVLQLQQEKRQLRQELESLMKEQDLLETKLRSYEREKTNFAPALEETQWEVCQKSGEISLLKQQLKESQMEVNAKASEILSLKAQLKDTRGKLEGMELKTQDLESALRTKGLELEVCENELQRKKNEAELLREKVNLLEQELLELRAQAALHRDAAPLGPPGIGLTFSEDIPALQRELDRLRAELKEERQGHDQMSSGFQHERLVWKEEKEKVIQYQKQLQQSYLAMYQRNQRLEKALQQLARGDIAGEPFEIDLEGADIPYEDIIATEI.

Gly2 is lipidated: N-myristoyl glycine. The tract at residues Gly135–Ser190 is disordered. Residues Pro153–Leu162 show a composition bias toward basic and acidic residues. Residues Ser174–Ser190 are compositionally biased toward polar residues. Residues Pro255–Ala573 are a coiled coil.

Belongs to the LZTS family. Binds EEF1G, TLK2 and CDK1. Post-translationally, phosphorylated on serine residues. Hyperphosphorylated by the cAMP-dependent kinase PKA during cell-cycle progression. As to expression, highly expressed in brain, in particular in cortex, the CA2 region of the hippocampus, olfactory bulb, striatum and pons. Not detectable in the other tissues tested.

The protein localises to the cytoplasm. It is found in the cell membrane. It localises to the cell projection. Its subcellular location is the dendritic spine. The protein resides in the postsynaptic density. The protein localises to the synapse. Involved in the regulation of cell growth. May stabilize the active CDC2-cyclin B1 complex and thereby contribute to the regulation of the cell cycle and the prevention of uncontrolled cell proliferation. May act as tumor suppressor. This chain is Leucine zipper putative tumor suppressor 1 (Lzts1), found in Rattus norvegicus (Rat).